The following is a 289-amino-acid chain: Nucleotide-binding protein MS1718 (289 aa).

Residue 8–15 (GRSGAGKS) participates in ATP binding. 56 to 59 (DIRN) lines the GTP pocket.

The protein belongs to the RapZ-like family.

Its function is as follows. Displays ATPase and GTPase activities. In Mannheimia succiniciproducens (strain KCTC 0769BP / MBEL55E), this protein is Nucleotide-binding protein MS1718.